We begin with the raw amino-acid sequence, 125 residues long: Large ribosomal subunit protein bL20 (125 aa).

This sequence belongs to the bacterial ribosomal protein bL20 family.

Binds directly to 23S ribosomal RNA and is necessary for the in vitro assembly process of the 50S ribosomal subunit. It is not involved in the protein synthesizing functions of that subunit. This is Large ribosomal subunit protein bL20 from Rhizorhabdus wittichii (strain DSM 6014 / CCUG 31198 / JCM 15750 / NBRC 105917 / EY 4224 / RW1) (Sphingomonas wittichii).